Here is a 322-residue protein sequence, read N- to C-terminus: Epoxide hydrolase A (322 aa).

Residues 27-131 (PVVILAHGFP…AVAALSVPAL (105 aa)) enclose the AB hydrolase-1 domain. Asp103 acts as the Nucleophile in catalysis. The active-site Proton acceptor is His298.

The protein belongs to the AB hydrolase superfamily. Epoxide hydrolase family. Homodimer.

The catalysed reaction is an epoxide + H2O = an ethanediol. Functionally, could be involved in detoxification of extraneous host-cell epoxides. Catalyzes the hydrolysis of epoxide-containing substrates. This chain is Epoxide hydrolase A (ephA), found in Mycobacterium tuberculosis (strain ATCC 25618 / H37Rv).